The following is a 254-amino-acid chain: Alcohol dehydrogenase 1 (254 aa).

NAD(+) is bound at residue 10 to 33; it reads FVAGLGGIGLDTSREIVKSGPKNL. Serine 138 is a binding site for substrate. Catalysis depends on tyrosine 151, which acts as the Proton acceptor.

The protein belongs to the short-chain dehydrogenases/reductases (SDR) family. In terms of assembly, homodimer.

It carries out the reaction a primary alcohol + NAD(+) = an aldehyde + NADH + H(+). It catalyses the reaction a secondary alcohol + NAD(+) = a ketone + NADH + H(+). In Drosophila montana (Fruit fly), this protein is Alcohol dehydrogenase 1 (Adh1).